The chain runs to 734 residues: MATKFPKFSQGLAQDPTTRRIWFGIATAHDFESHDGMTEENLYQKIFASHFGQLAIIFLWTSGNLFHVAWQGNFERWVADPLHVRPIAHAIWDPHFGQPAVEAFTRGGASGPVNISYSGVYQWWYTIGMRSNTDLYIGALFLLITASMTLFAGWLHLQPQFKPSLSWFKNAESRLNHHLSGLFGVSSLAWTGHLIHVAIPESRGQHVRWDNFLNVLPHPAGLSPFFTGNWAAYAQNPDSTSHIFSTSQGAGTAILTFLGGFHPQTQSLWLTDIAHHHLAIAVLFIVAGHMYRTNFGIGHSMREILEAQRPPGGRLGAGHSGLYDTVNNSLHFQLGLALASLGVITSVVAQHMYSLSPYAFLAQDFTTQAALYTHHQYIAGFIMTGAFAHGAIFFIRDYDPELNKDNVLARMLEHKEAIISHLSWASLFLGFHTLGLYVHNDVMQAFGTPEKQILIEPVFAQWIQASHGKSLYGFDVLLSSSSSFAASASDSIWLPGWLDAINSNSNSLFLTIGPGDFLVHHAIALGLHTTTLILVKGALDARGSKLMPDKKDFGYSFPCDGPGRGGTCDISAWDAFYLAVFWMLNTIGWVTFYWHWKHLTLWQGNVAQFDESSTYLMGWLRDYLWLNSSQLINGYNPFGMNSLSVWAWMFLFGHLIWATGFMFLISWRGYWQELIETLAWAHERTPLANLVRWKDKPVALSIVQARVVGLAHFSVGYVFTYAAFLIASTSGKFG.

The next 8 helical transmembrane spans lie at 46–69 (IFASHFGQLAIIFLWTSGNLFHVA), 135–158 (LYIGALFLLITASMTLFAGWLHLQ), 175–199 (LNHHLSGLFGVSSLAWTGHLIHVAI), 273–291 (IAHHHLAIAVLFIVAGHMY), 330–353 (LHFQLGLALASLGVITSVVAQHMY), 369–395 (AALYTHHQYIAGFIMTGAFAHGAIFFI), 417–439 (AIISHLSWASLFLGFHTLGLYVH), and 517–535 (FLVHHAIALGLHTTTLILV). The [4Fe-4S] cluster site is built by Cys559 and Cys568. The next 2 helical transmembrane spans lie at 575 to 596 (AFYLAVFWMLNTIGWVTFYWHW) and 643 to 665 (LSVWAWMFLFGHLIWATGFMFLI). Positions 654, 662, and 670 each coordinate chlorophyll a. Trp671 lines the phylloquinone pocket. A helical membrane pass occupies residues 707–727 (VVGLAHFSVGYVFTYAAFLIA).

The protein belongs to the PsaA/PsaB family. The PsaA/B heterodimer binds the P700 chlorophyll special pair and subsequent electron acceptors. PSI consists of a core antenna complex that captures photons, and an electron transfer chain that converts photonic excitation into a charge separation. The eukaryotic PSI reaction center is composed of at least 11 subunits. P700 is a chlorophyll a/chlorophyll a' dimer, A0 is one or more chlorophyll a, A1 is one or both phylloquinones and FX is a shared 4Fe-4S iron-sulfur center. serves as cofactor.

It is found in the plastid. It localises to the chloroplast thylakoid membrane. It catalyses the reaction reduced [plastocyanin] + hnu + oxidized [2Fe-2S]-[ferredoxin] = oxidized [plastocyanin] + reduced [2Fe-2S]-[ferredoxin]. Functionally, psaA and PsaB bind P700, the primary electron donor of photosystem I (PSI), as well as the electron acceptors A0, A1 and FX. PSI is a plastocyanin-ferredoxin oxidoreductase, converting photonic excitation into a charge separation, which transfers an electron from the donor P700 chlorophyll pair to the spectroscopically characterized acceptors A0, A1, FX, FA and FB in turn. Oxidized P700 is reduced on the lumenal side of the thylakoid membrane by plastocyanin. This Mesostigma viride (Green alga) protein is Photosystem I P700 chlorophyll a apoprotein A2.